The primary structure comprises 182 residues: Probable inosine/xanthosine triphosphatase (182 aa).

Residue Glu65 coordinates Mg(2+). A substrate-binding site is contributed by 65 to 66 (EA).

It belongs to the YjjX NTPase family. In terms of assembly, homodimer. The cofactor is Mg(2+). Mn(2+) is required as a cofactor.

It catalyses the reaction XTP + H2O = XDP + phosphate + H(+). The catalysed reaction is ITP + H2O = IDP + phosphate + H(+). Its function is as follows. Phosphatase that hydrolyzes non-canonical purine nucleotides such as XTP and ITP to their respective diphosphate derivatives. Probably excludes non-canonical purines from DNA/RNA precursor pool, thus preventing their incorporation into DNA/RNA and avoiding chromosomal lesions. The polypeptide is Probable inosine/xanthosine triphosphatase (Pyrobaculum neutrophilum (strain DSM 2338 / JCM 9278 / NBRC 100436 / V24Sta) (Thermoproteus neutrophilus)).